A 240-amino-acid chain; its full sequence is Ribosomal RNA large subunit methyltransferase E (240 aa).

Gly residues predominate over residues 1–20 (MSKAGGNKGGVKTGGRGGAG). The tract at residues 1 to 27 (MSKAGGNKGGVKTGGRGGAGSSNLQVR) is disordered. 5 residues coordinate S-adenosyl-L-methionine: Gly-92, Trp-94, Asp-115, Asp-131, and Asp-155. The Proton acceptor role is filled by Lys-195.

This sequence belongs to the class I-like SAM-binding methyltransferase superfamily. RNA methyltransferase RlmE family.

The protein resides in the cytoplasm. It carries out the reaction uridine(2552) in 23S rRNA + S-adenosyl-L-methionine = 2'-O-methyluridine(2552) in 23S rRNA + S-adenosyl-L-homocysteine + H(+). Specifically methylates the uridine in position 2552 of 23S rRNA at the 2'-O position of the ribose in the fully assembled 50S ribosomal subunit. This is Ribosomal RNA large subunit methyltransferase E from Brucella anthropi (strain ATCC 49188 / DSM 6882 / CCUG 24695 / JCM 21032 / LMG 3331 / NBRC 15819 / NCTC 12168 / Alc 37) (Ochrobactrum anthropi).